The chain runs to 148 residues: Cytochrome c6, chloroplastic (148 aa).

The transit peptide at 1 to 58 directs the protein to the chloroplast; the sequence is MLQLANRSVRAKAARASQSARSVSCAAAKRGADVAPLTSALAVTASILLTTGAASASA. 4 residues coordinate heme c: cysteine 72, cysteine 75, histidine 76, and methionine 118.

Belongs to the cytochrome c family. PetJ subfamily. Thought to function as a monomer, however 2 crystal forms are observed; a homodimer and homotrimer, suggesting the protein oligomerizes. Binds 1 heme c group covalently per subunit.

It is found in the plastid. Its subcellular location is the chloroplast thylakoid lumen. Functionally, functions as an electron carrier between membrane-bound cytochrome b6-f and photosystem I in oxygenic photosynthesis. In Chlamydomonas reinhardtii (Chlamydomonas smithii), this protein is Cytochrome c6, chloroplastic (petJ).